The primary structure comprises 311 residues: Olfactory receptor 1L4 (311 aa).

At 1–26 the chain is on the extracellular side; sequence METKNYSSSTSGFILLGLSSNPKLQK. Asn-5 carries N-linked (GlcNAc...) asparagine glycosylation. Residues 27-50 traverse the membrane as a helical segment; it reads PLFAIFLIMYLLTAVGNVLIILAI. Residues 51–58 are Cytoplasmic-facing; sequence YSDPRLHT. A helical membrane pass occupies residues 59-80; the sequence is PMYFFLSNLSFMDICFTTVIVP. At 81-101 the chain is on the extracellular side; sequence KMLVNFLSETKIISYVGCLIQ. A disulfide bridge links Cys-98 with Cys-190. Residues 102 to 121 traverse the membrane as a helical segment; sequence MYFFMAFGNTDSYLLASMAI. Residues 122–140 are Cytoplasmic-facing; it reads DRLVAICNPLHYDVVMKPW. The helical transmembrane segment at 141-159 threads the bilayer; sequence HCLLMLLGSCSISHLHSLF. Residues 160-197 lie on the Extracellular side of the membrane; the sequence is RVLLMSRLSFCASHIIKHFFCDTQPVLKLSCSDTSSSQ. The helical transmembrane segment at 198–220 threads the bilayer; it reads MVVMTETLAVIVTPFLCTIFSYL. At 221 to 237 the chain is on the cytoplasmic side; the sequence is QIIVTVLRIPSAAGKWK. Residues 238-260 traverse the membrane as a helical segment; it reads AFSTCGSHLTVVVLFYGSVIYVY. The Extracellular segment spans residues 261–273; that stretch reads FRPLSMYSVMKGR. A helical membrane pass occupies residues 274 to 293; that stretch reads VATVMYTVVTPMLNPFIYSL. The Cytoplasmic portion of the chain corresponds to 294–311; it reads RNKDMKRGLKKLRHRIYS.

Belongs to the G-protein coupled receptor 1 family.

It is found in the cell membrane. Odorant receptor. The protein is Olfactory receptor 1L4 (OR1L4) of Homo sapiens (Human).